The sequence spans 469 residues: 3-isopropylmalate dehydratase large subunit (469 aa).

[4Fe-4S] cluster-binding residues include Cys-347, Cys-407, and Cys-410.

It belongs to the aconitase/IPM isomerase family. LeuC type 1 subfamily. In terms of assembly, heterodimer of LeuC and LeuD. The cofactor is [4Fe-4S] cluster.

The enzyme catalyses (2R,3S)-3-isopropylmalate = (2S)-2-isopropylmalate. It participates in amino-acid biosynthesis; L-leucine biosynthesis; L-leucine from 3-methyl-2-oxobutanoate: step 2/4. Functionally, catalyzes the isomerization between 2-isopropylmalate and 3-isopropylmalate, via the formation of 2-isopropylmaleate. The polypeptide is 3-isopropylmalate dehydratase large subunit (Synechococcus sp. (strain RCC307)).